The chain runs to 1960 residues: Intraflagellar transport protein 172 (1960 aa).

WD repeat units lie at residues 63–103 (SNKD…TDKK) and 328–367 (GFLP…YRYC). TPR repeat units follow at residues 1064–1098 (KADQ…QSYR), 1362–1395 (CDLF…QEIV), and 1397–1428 (MYLD…RSIR).

The protein belongs to the IFT172 family.

It is found in the cell projection. The protein resides in the cilium. Its subcellular location is the flagellum. The protein localises to the cytoplasm. It localises to the cytoskeleton. It is found in the flagellum axoneme. The protein resides in the flagellum basal body. Functionally, component of the intraflagellar transport complex B (IFT-B) involved in flagellar assembly. The chain is Intraflagellar transport protein 172 from Giardia intestinalis (strain ATCC 50803 / WB clone C6) (Giardia lamblia).